The chain runs to 118 residues: MLVIFLGILGLLASQVSSQLVGQLRPTEDPPEEELEYWCAYMESCQFCWDCQDGTCINKIDGSVIYKNEYVKSCLVSRWLDKCMYDLDKGIYHTMNCSQPWSWNPYKYFRKEWKKDEL.

Positions 1–18 (MLVIFLGILGLLASQVSS) are cleaved as a signal peptide. N96 is a glycosylation site (N-linked (GlcNAc...) asparagine; by host). A Prevents secretion from ER motif is present at residues 115–118 (KDEL).

It belongs to the asfivirus MGF 110 family. In terms of processing, N-glycosylated.

Its subcellular location is the host endoplasmic reticulum lumen. In terms of biological role, plays a role in virus cell tropism, and may be required for efficient virus replication in macrophages. The protein is Protein MGF 110-6L of African swine fever virus (isolate Tick/South Africa/Pretoriuskop Pr4/1996) (ASFV).